A 274-amino-acid polypeptide reads, in one-letter code: tRNA-cytidine(32) 2-sulfurtransferase (274 aa).

A PP-loop motif motif is present at residues 40 to 45 (SGGKDS). Positions 115, 118, and 206 each coordinate [4Fe-4S] cluster.

It belongs to the TtcA family. As to quaternary structure, homodimer. Mg(2+) is required as a cofactor. The cofactor is [4Fe-4S] cluster.

The protein localises to the cytoplasm. The enzyme catalyses cytidine(32) in tRNA + S-sulfanyl-L-cysteinyl-[cysteine desulfurase] + AH2 + ATP = 2-thiocytidine(32) in tRNA + L-cysteinyl-[cysteine desulfurase] + A + AMP + diphosphate + H(+). It participates in tRNA modification. In terms of biological role, catalyzes the ATP-dependent 2-thiolation of cytidine in position 32 of tRNA, to form 2-thiocytidine (s(2)C32). The sulfur atoms are provided by the cysteine/cysteine desulfurase (IscS) system. The sequence is that of tRNA-cytidine(32) 2-sulfurtransferase from Pseudomonas putida (strain W619).